Reading from the N-terminus, the 293-residue chain is Histamine N-methyltransferase (293 aa).

Glu-28 contributes to the substrate binding site. Residues Gly-60, Glu-89, Gln-94, Ser-120, and Ile-142 each coordinate S-adenosyl-L-methionine. Asn-283 contributes to the substrate binding site.

This sequence belongs to the class I-like SAM-binding methyltransferase superfamily. HNMT family. As to quaternary structure, monomer.

It localises to the cytoplasm. It catalyses the reaction histamine + S-adenosyl-L-methionine = N(tau)-methylhistamine + S-adenosyl-L-homocysteine + H(+). Inactivates histamine by N-methylation. Plays an important role in degrading histamine and in regulating the airway response to histamine. This Xenopus tropicalis (Western clawed frog) protein is Histamine N-methyltransferase (hnmt).